A 208-amino-acid chain; its full sequence is Large ribosomal subunit protein uL4 (208 aa).

A disordered region spans residues 45–89 (RQGTHAHKNRSAVSGGGKKPWRQKGTGRARQGSTRSPQWRGGGTV).

The protein belongs to the universal ribosomal protein uL4 family. As to quaternary structure, part of the 50S ribosomal subunit.

In terms of biological role, one of the primary rRNA binding proteins, this protein initially binds near the 5'-end of the 23S rRNA. It is important during the early stages of 50S assembly. It makes multiple contacts with different domains of the 23S rRNA in the assembled 50S subunit and ribosome. Forms part of the polypeptide exit tunnel. The protein is Large ribosomal subunit protein uL4 of Lactococcus lactis subsp. cremoris (strain MG1363).